Reading from the N-terminus, the 315-residue chain is Protein OPG185 (315 aa).

An N-terminal signal peptide occupies residues 1-16 (MTRLPILLLLISLVYA). Residues 17 to 121 (TPFPQTSKKI…NDTDKVDYEE (105 aa)) form the Ig-like V-type domain. At 17–279 (TPFPQTSKKI…SNYKTKDFVE (263 aa)) the chain is on the virion surface side. A disulfide bridge links C34 with C103. N-linked (GlcNAc...) asparagine; by host glycans are attached at residues N37, N69, N112, and N161. Polar residues predominate over residues 193 to 202 (NTVSASSGES). The segment at 193–213 (NTVSASSGESTTDETPEPITD) is disordered. N-linked (GlcNAc...) asparagine; by host glycosylation is present at N254. The chain crosses the membrane as a helical span at residues 280-303 (IFGITALIILSAVAIFCITYYIYN). At 304-315 (KRSRKYKTENKV) the chain is on the intravirion side.

Belongs to the orthopoxvirus OPG185 family. In terms of assembly, heterodimerizes with OPG040. The heterodimer OPG185-OPG040 interacts with components of the entry fusion complex OPG143 and OPG094. Heterodimer with C3/VPC protein; disulfide-linked. Post-translationally, glycosylated; contains phosphate and sulfate-substituted glycans. O-glycosylation is required for hemagglutination and hemadsorption activities of infected cell membranes.

It localises to the virion membrane. Its subcellular location is the host membrane. Functionally, prevents cell to cell fusion by interacting with and directing the viral OPG040 protein on the host plasma membrane. The OPG185-OPG040 complex associates with components of the entry fusion complex (EFC) presumably to avoid superinfection and syncytium formation. Via its interaction with C3/VCP protein, protects the infected cell and probably also the extracellular enveloped virus from complement attack. This is Protein OPG185 (OPG185) from Homo sapiens (Human).